The following is a 570-amino-acid chain: Sulfite reductase [NADPH] hemoprotein beta-component (570 aa).

[4Fe-4S] cluster is bound by residues C434, C440, C479, and C483. Position 483 (C483) interacts with siroheme.

This sequence belongs to the nitrite and sulfite reductase 4Fe-4S domain family. As to quaternary structure, alpha(8)-beta(8). The alpha component is a flavoprotein, the beta component is a hemoprotein. It depends on siroheme as a cofactor. [4Fe-4S] cluster serves as cofactor.

The catalysed reaction is hydrogen sulfide + 3 NADP(+) + 3 H2O = sulfite + 3 NADPH + 4 H(+). The protein operates within sulfur metabolism; hydrogen sulfide biosynthesis; hydrogen sulfide from sulfite (NADPH route): step 1/1. Its function is as follows. Component of the sulfite reductase complex that catalyzes the 6-electron reduction of sulfite to sulfide. This is one of several activities required for the biosynthesis of L-cysteine from sulfate. This is Sulfite reductase [NADPH] hemoprotein beta-component from Salmonella heidelberg (strain SL476).